Reading from the N-terminus, the 117-residue chain is Holo-[acyl-carrier-protein] synthase (117 aa).

Residues aspartate 8 and glutamate 58 each contribute to the Mg(2+) site.

Belongs to the P-Pant transferase superfamily. AcpS family. Mg(2+) serves as cofactor.

The protein localises to the cytoplasm. It catalyses the reaction apo-[ACP] + CoA = holo-[ACP] + adenosine 3',5'-bisphosphate + H(+). Its function is as follows. Transfers the 4'-phosphopantetheine moiety from coenzyme A to a Ser of acyl-carrier-protein. In Enterococcus faecalis (strain ATCC 700802 / V583), this protein is Holo-[acyl-carrier-protein] synthase.